The sequence spans 285 residues: Bifunctional protein FolD (285 aa).

Residues 166 to 168 (GAS) and I232 contribute to the NADP(+) site.

The protein belongs to the tetrahydrofolate dehydrogenase/cyclohydrolase family. Homodimer.

It carries out the reaction (6R)-5,10-methylene-5,6,7,8-tetrahydrofolate + NADP(+) = (6R)-5,10-methenyltetrahydrofolate + NADPH. The catalysed reaction is (6R)-5,10-methenyltetrahydrofolate + H2O = (6R)-10-formyltetrahydrofolate + H(+). It functions in the pathway one-carbon metabolism; tetrahydrofolate interconversion. In terms of biological role, catalyzes the oxidation of 5,10-methylenetetrahydrofolate to 5,10-methenyltetrahydrofolate and then the hydrolysis of 5,10-methenyltetrahydrofolate to 10-formyltetrahydrofolate. The protein is Bifunctional protein FolD of Aliivibrio salmonicida (strain LFI1238) (Vibrio salmonicida (strain LFI1238)).